The chain runs to 447 residues: Cysteine--tRNA ligase (447 aa).

Cysteine 28 contributes to the Zn(2+) binding site. Positions 30 to 40 (PTVYNYIHIGN) match the 'HIGH' region motif. Residues cysteine 211, histidine 236, and glutamate 240 each contribute to the Zn(2+) site. The 'KMSKS' region signature appears at 268–272 (KMSKS). Lysine 271 is a binding site for ATP.

It belongs to the class-I aminoacyl-tRNA synthetase family. As to quaternary structure, monomer. Zn(2+) serves as cofactor.

It localises to the cytoplasm. The catalysed reaction is tRNA(Cys) + L-cysteine + ATP = L-cysteinyl-tRNA(Cys) + AMP + diphosphate. The polypeptide is Cysteine--tRNA ligase (Streptococcus pyogenes serotype M1).